The following is a 400-amino-acid chain: Chalcone synthase C2 (400 aa).

C168 is an active-site residue.

Belongs to the thiolase-like superfamily. Chalcone/stilbene synthases family.

It carries out the reaction (E)-4-coumaroyl-CoA + 3 malonyl-CoA + 3 H(+) = 2',4,4',6'-tetrahydroxychalcone + 3 CO2 + 4 CoA. It functions in the pathway secondary metabolite biosynthesis; flavonoid biosynthesis. Functionally, the primary product of this enzyme is 4,2',4',6'-tetrahydroxychalcone (also termed naringenin-chalcone or chalcone) which can under specific conditions spontaneously isomerize into naringenin. This chain is Chalcone synthase C2 (C2), found in Zea mays (Maize).